The sequence spans 130 residues: UPF0102 protein RSc3265 (130 aa).

It belongs to the UPF0102 family.

The polypeptide is UPF0102 protein RSc3265 (Ralstonia nicotianae (strain ATCC BAA-1114 / GMI1000) (Ralstonia solanacearum)).